Reading from the N-terminus, the 1642-residue chain is Coiled-coil domain-containing protein 7A (1642 aa).

The interval 21 to 51 (PYKKGLLNSSPKPKEKHNAKSKYGKNESMVL) is disordered. Residues 161-184 (VNQMEEISKDQSNLEELQSDGKTA) form an LRR 1 repeat. The stretch at 279–330 (LEKALNDQQTIESKYKQLETDFQMLIMEKTLLEAEIRRLREIERVKSAAKEE) forms a coiled coil. An LRR 2 repeat occupies 1310-1333 (IKELSKTLNLDGGDIELSDFVFKT).

In terms of tissue distribution, exclusively expressed in the testes.

The sequence is that of Coiled-coil domain-containing protein 7A from Mus musculus (Mouse).